Reading from the N-terminus, the 309-residue chain is Homoserine kinase (309 aa).

ATP is bound at residue 91 to 101 (PIGSGLGSSAC).

The protein belongs to the GHMP kinase family. Homoserine kinase subfamily.

The protein localises to the cytoplasm. The catalysed reaction is L-homoserine + ATP = O-phospho-L-homoserine + ADP + H(+). The protein operates within amino-acid biosynthesis; L-threonine biosynthesis; L-threonine from L-aspartate: step 4/5. Functionally, catalyzes the ATP-dependent phosphorylation of L-homoserine to L-homoserine phosphate. This Serratia proteamaculans (strain 568) protein is Homoserine kinase.